Consider the following 389-residue polypeptide: Chalcone synthase E (389 aa).

Cys164 is an active-site residue.

Belongs to the thiolase-like superfamily. Chalcone/stilbene synthases family.

It carries out the reaction (E)-4-coumaroyl-CoA + 3 malonyl-CoA + 3 H(+) = 2',4,4',6'-tetrahydroxychalcone + 3 CO2 + 4 CoA. It participates in secondary metabolite biosynthesis; flavonoid biosynthesis. Its function is as follows. The primary product of this enzyme is 4,2',4',6'-tetrahydroxychalcone (also termed naringenin-chalcone or chalcone) which can under specific conditions spontaneously isomerize into naringenin. The polypeptide is Chalcone synthase E (CHSE) (Ipomoea nil (Japanese morning glory)).